Reading from the N-terminus, the 255-residue chain is Ornithine decarboxylase antizyme (255 aa).

The protein belongs to the ODC antizyme family. Interacts with ODC and thereby sterically blocks ODC homodimerization.

In terms of biological role, ornithine decarboxylase (ODC) antizyme protein that negatively regulates ODC activity and intracellular polyamine biosynthesis in response to increased intracellular polyamine levels. Binds to ODC monomers, inhibiting the assembly of the functional ODC homodimer, and targets the monomers for ubiquitin-independent proteolytic destruction by the 26S proteasome. This chain is Ornithine decarboxylase antizyme (OAZ1), found in Candida glabrata (strain ATCC 2001 / BCRC 20586 / JCM 3761 / NBRC 0622 / NRRL Y-65 / CBS 138) (Yeast).